The chain runs to 142 residues: MKTFVAKPETVQRDWYVVDATDKTLGRLASEIALRLRGKHKPEYTPHVDTGDYIIVINAEKVAVTGRKAQDKMYYAHSGYPGGLKETNFEKLIAHKPEMVLEKAVKGMLPKGPLGRAMFRKMKVYAGAEHSHAAQQPQVLDI.

This sequence belongs to the universal ribosomal protein uL13 family. As to quaternary structure, part of the 50S ribosomal subunit.

Functionally, this protein is one of the early assembly proteins of the 50S ribosomal subunit, although it is not seen to bind rRNA by itself. It is important during the early stages of 50S assembly. This is Large ribosomal subunit protein uL13 from Alteromonas mediterranea (strain DSM 17117 / CIP 110805 / LMG 28347 / Deep ecotype).